A 495-amino-acid chain; its full sequence is Leucine aminopeptidase 2 (495 aa).

The signal sequence occupies residues 1–21; the sequence is MKSQLLSLAVAVTTISQGVVG. The region spanning 124 to 218 is the PA domain; it reads PPASKIMAEL…EDGKNLATLV (95 aa). 2 N-linked (GlcNAc...) asparagine glycosylation sites follow: N142 and N235. Positions 259 and 271 each coordinate Zn(2+). N-linked (GlcNAc...) asparagine glycosylation is present at N272. Residue E303 is the Proton acceptor of the active site. Residues E304 and D332 each coordinate Zn(2+). The N-linked (GlcNAc...) asparagine glycan is linked to N352. A Zn(2+)-binding site is contributed by H430.

This sequence belongs to the peptidase M28 family. M28A subfamily. As to quaternary structure, monomer. Requires Zn(2+) as cofactor.

It is found in the secreted. With respect to regulation, activity is inhibited by EDTA, o-phenanthroline, bestatin and amastatin. In terms of biological role, extracellular aminopeptidase that releases a wide variety of amino acids from natural peptides and contributes to pathogenicity. This is Leucine aminopeptidase 2 (LAP2) from Trichophyton rubrum (Athlete's foot fungus).